Consider the following 292-residue polypeptide: Homoserine kinase (292 aa).

84-94 (PLSRGLGSSSA) contributes to the ATP binding site.

Belongs to the GHMP kinase family. Homoserine kinase subfamily.

Its subcellular location is the cytoplasm. It carries out the reaction L-homoserine + ATP = O-phospho-L-homoserine + ADP + H(+). It functions in the pathway amino-acid biosynthesis; L-threonine biosynthesis; L-threonine from L-aspartate: step 4/5. Functionally, catalyzes the ATP-dependent phosphorylation of L-homoserine to L-homoserine phosphate. This chain is Homoserine kinase, found in Campylobacter jejuni subsp. jejuni serotype O:2 (strain ATCC 700819 / NCTC 11168).